A 227-amino-acid polypeptide reads, in one-letter code: Glutathione S-transferase U18 (227 aa).

Residues 4-83 enclose the GST N-terminal domain; sequence EDVKLIGSWA…YIDEAWNSSG (80 aa). Glutathione is bound by residues 14-15, 40-41, 54-55, and 67-68; these read SV, SK, KM, and ES. Positions 90 to 221 constitute a GST C-terminal domain; it reads HPYDRAIARF…TKLAEFARKL (132 aa).

It belongs to the GST superfamily. Tau family.

The protein localises to the cytoplasm. It localises to the cytosol. It carries out the reaction RX + glutathione = an S-substituted glutathione + a halide anion + H(+). May be involved in the conjugation of reduced glutathione to a wide number of exogenous and endogenous hydrophobic electrophiles and have a detoxification role against certain herbicides. The sequence is that of Glutathione S-transferase U18 (GSTU18) from Arabidopsis thaliana (Mouse-ear cress).